The chain runs to 545 residues: CTP synthase (545 aa).

Positions 1-266 (MTHFIFVTGG…DDLICERFGF (266 aa)) are amidoligase domain. Residue Ser13 participates in CTP binding. Ser13 is a binding site for UTP. Residues 14–19 (SLGKGI) and Asp71 each bind ATP. Residues Asp71 and Glu140 each contribute to the Mg(2+) site. CTP contacts are provided by residues 147–149 (DIE), 187–192 (KTKPTQ), and Lys223. UTP contacts are provided by residues 187–192 (KTKPTQ) and Lys223. 239-241 (KDA) is an ATP binding site. The Glutamine amidotransferase type-1 domain occupies 292–543 (RVAMVGKYVE…IDAAKTQHQK (252 aa)). An L-glutamine-binding site is contributed by Gly353. The Nucleophile; for glutamine hydrolysis role is filled by Cys380. Residues 381–384 (LGMQ), Glu404, and Arg471 each bind L-glutamine. Residues His516 and Glu518 contribute to the active site.

It belongs to the CTP synthase family. Homotetramer.

It catalyses the reaction UTP + L-glutamine + ATP + H2O = CTP + L-glutamate + ADP + phosphate + 2 H(+). The enzyme catalyses L-glutamine + H2O = L-glutamate + NH4(+). The catalysed reaction is UTP + NH4(+) + ATP = CTP + ADP + phosphate + 2 H(+). It functions in the pathway pyrimidine metabolism; CTP biosynthesis via de novo pathway; CTP from UDP: step 2/2. With respect to regulation, allosterically activated by GTP, when glutamine is the substrate; GTP has no effect on the reaction when ammonia is the substrate. The allosteric effector GTP functions by stabilizing the protein conformation that binds the tetrahedral intermediate(s) formed during glutamine hydrolysis. Inhibited by the product CTP, via allosteric rather than competitive inhibition. In terms of biological role, catalyzes the ATP-dependent amination of UTP to CTP with either L-glutamine or ammonia as the source of nitrogen. Regulates intracellular CTP levels through interactions with the four ribonucleotide triphosphates. This Acinetobacter baumannii (strain AB307-0294) protein is CTP synthase.